We begin with the raw amino-acid sequence, 293 residues long: 4-diphosphocytidyl-2-C-methyl-D-erythritol kinase (293 aa).

The active site involves lysine 10. Residue 96–106 coordinates ATP; the sequence is PVASGIGGGSS. Aspartate 138 is a catalytic residue.

Belongs to the GHMP kinase family. IspE subfamily.

The enzyme catalyses 4-CDP-2-C-methyl-D-erythritol + ATP = 4-CDP-2-C-methyl-D-erythritol 2-phosphate + ADP + H(+). Its pathway is isoprenoid biosynthesis; isopentenyl diphosphate biosynthesis via DXP pathway; isopentenyl diphosphate from 1-deoxy-D-xylulose 5-phosphate: step 3/6. Its function is as follows. Catalyzes the phosphorylation of the position 2 hydroxy group of 4-diphosphocytidyl-2C-methyl-D-erythritol. This chain is 4-diphosphocytidyl-2-C-methyl-D-erythritol kinase, found in Chelativorans sp. (strain BNC1).